The following is a 248-amino-acid chain: Triosephosphate isomerase (248 aa).

Positions 12 and 14 each coordinate substrate. N6-acetyllysine is present on Lys14. Tyr68 carries the 3'-nitrotyrosine modification. Residue His96 is the Electrophile of the active site. Ser106 is subject to Phosphoserine. Lys142 is covalently cross-linked (Glycyl lysine isopeptide (Lys-Gly) (interchain with G-Cter in SUMO1)). An N6-succinyllysine modification is found at Lys149. The residue at position 156 (Lys156) is an N6-acetyllysine; alternate. N6-succinyllysine; alternate is present on Lys156. Glu166 acts as the Proton acceptor in catalysis. Thr173 is modified (phosphothreonine). Position 194 is an N6-acetyllysine; alternate (Lys194). Lys194 is modified (N6-succinyllysine; alternate). At Lys194 the chain carries N6-methyllysine; alternate. 3'-nitrotyrosine is present on Tyr209. Phosphoserine is present on Ser212. Thr214 bears the Phosphothreonine mark. The residue at position 223 (Ser223) is a Phosphoserine. An N6-acetyllysine modification is found at Lys238.

The protein belongs to the triosephosphate isomerase family. Homodimer.

The protein resides in the cytoplasm. The catalysed reaction is dihydroxyacetone phosphate = methylglyoxal + phosphate. It carries out the reaction D-glyceraldehyde 3-phosphate = dihydroxyacetone phosphate. It participates in carbohydrate degradation; glycolysis; D-glyceraldehyde 3-phosphate from glycerone phosphate: step 1/1. The protein operates within carbohydrate biosynthesis; gluconeogenesis. In terms of biological role, triosephosphate isomerase is an extremely efficient metabolic enzyme that catalyzes the interconversion between dihydroxyacetone phosphate (DHAP) and D-glyceraldehyde-3-phosphate (G3P) in glycolysis and gluconeogenesis. Its function is as follows. It is also responsible for the non-negligible production of methylglyoxal a reactive cytotoxic side-product that modifies and can alter proteins, DNA and lipids. The polypeptide is Triosephosphate isomerase (TPI1) (Sus scrofa (Pig)).